The sequence spans 178 residues: Nicotinamide-nucleotide adenylyltransferase (178 aa).

Belongs to the archaeal NMN adenylyltransferase family.

Its subcellular location is the cytoplasm. The catalysed reaction is beta-nicotinamide D-ribonucleotide + ATP + H(+) = diphosphate + NAD(+). It functions in the pathway cofactor biosynthesis; NAD(+) biosynthesis; NAD(+) from nicotinamide D-ribonucleotide: step 1/1. The chain is Nicotinamide-nucleotide adenylyltransferase from Pyrobaculum arsenaticum (strain DSM 13514 / JCM 11321 / PZ6).